Consider the following 796-residue polypeptide: Protein SEY1 homolog (796 aa).

Residues 1–701 (MESSNDFSNK…AGTSISSWRN (701 aa)) lie on the Cytoplasmic side of the membrane. The region spanning 46–280 (GFRFNVVTIL…VPSDGFFVYS (235 aa)) is the GB1/RHD3-type G domain. Residue 56–63 (GSQSSGKS) coordinates GTP. The stretch at 554-626 (SLVLLLKAAR…DALTLLKVLK (73 aa)) forms a coiled coil. The helical transmembrane segment at 702–722 (IPPIFWLVLLVLGWNELRSVF) threads the bilayer. Residues 723 to 725 (KVL) lie on the Lumenal side of the membrane. A helical membrane pass occupies residues 726–746 (LRFYVVIPLLIVFYFTFSYSA). Topologically, residues 747-796 (TKLLGPKADQYVKPVRDKVLSLFTALLAWFVRTLHMIASKSSSFKQRPAT) are cytoplasmic.

The protein belongs to the TRAFAC class dynamin-like GTPase superfamily. GB1/RHD3 GTPase family. RHD3 subfamily.

It is found in the endoplasmic reticulum membrane. Probable GTP-binding protein that may be involved in cell development. The sequence is that of Protein SEY1 homolog from Theileria parva (East coast fever infection agent).